The following is a 335-amino-acid chain: Carboxylesterase 1 (335 aa).

Residues histidine 90–glycine 92 carry the Involved in the stabilization of the negatively charged intermediate by the formation of the oxyanion hole motif. Paraoxon contacts are provided by residues glycine 92 to glycine 93, serine 169, and alanine 170. Serine 169 is a catalytic residue. Active-site residues include aspartate 276 and histidine 306.

Belongs to the 'GDXG' lipolytic enzyme family.

The enzyme catalyses a carboxylic ester + H2O = an alcohol + a carboxylate + H(+). Is inhibited by the organophosphates paraoxon and dimethylchlorophosphate (DMCP). Its function is as follows. Carboxylesterase acting on esters with varying acyl chain length. The chain is Carboxylesterase 1 (CXE1) from Actinidia eriantha (Velvet vine).